Consider the following 387-residue polypeptide: DNA primase small subunit PriS (387 aa).

Residues D98, D100, and D289 contribute to the active site.

The protein belongs to the eukaryotic-type primase small subunit family. As to quaternary structure, heterodimer of a small subunit (PriS) and a large subunit (PriL). Mg(2+) serves as cofactor. It depends on Mn(2+) as a cofactor.

In terms of biological role, catalytic subunit of DNA primase, an RNA polymerase that catalyzes the synthesis of short RNA molecules used as primers for DNA polymerase during DNA replication. The small subunit contains the primase catalytic core and has DNA synthesis activity on its own. Binding to the large subunit stabilizes and modulates the activity, increasing the rate of DNA synthesis while decreasing the length of the DNA fragments, and conferring RNA synthesis capability. The DNA polymerase activity may enable DNA primase to also catalyze primer extension after primer synthesis. May also play a role in DNA repair. This chain is DNA primase small subunit PriS, found in Halorubrum lacusprofundi (strain ATCC 49239 / DSM 5036 / JCM 8891 / ACAM 34).